Consider the following 301-residue polypeptide: Single-stranded DNA-binding protein (301 aa).

The LAST stretch occupies residues 3–7 (KRKST). Zn(2+)-binding residues include His-64, Cys-77, Cys-87, and Cys-90. Residues 272 to 301 (TKTEDDFMSSSSGSSSSADDTDLDDLLNDL) form a disordered region. The span at 279–289 (MSSSSGSSSSA) shows a compositional bias: low complexity. Positions 290-301 (DDTDLDDLLNDL) are enriched in acidic residues.

Belongs to the Tequatrovirus single-stranded DNA-binding protein family. In terms of assembly, homodimer in the absence of DNA, monomer when binding DNA. Interacts with the DNA helicase assembly protein; a ternary complex between the helicase assembly protein, the single-stranded DNA-binding protein and ssDNA is an obligatory intermediate in the helicase loading mechanism. Part of the replicase complex that includes the DNA polymerase, the polymerase clamp, the clamp loader complex, the single-stranded DNA binding protein, the primase, the DnaB-like SF4 replicative helicase and the helicase assembly factor. Interacts (via C-terminus) with the viral SF1 dDA helicase. Interacts with the viral SF2 UvsW repair helicase.

Its function is as follows. Single-stranded DNA-binding protein that participates in viral DNA replication, recombination, and repair. Coats the lagging-strand ssDNA as the replication fork advances. Stimulates the activities of viral DNA polymerase and DnaB-like SF4 replicative helicase, probably via its interaction with the helicase assembly factor. Stimulates the unwinding activity of UvsW helicase, inhibits it DNA winding activity. Together with DnaB-like SF4 replicative helicase and the helicase assembly factor, promotes pairing of two homologous DNA molecules containing complementary single-stranded regions and mediates homologous DNA strand exchange. Also promotes the formation of joint molecules. mRNA specific autogenous translational repressor. In Escherichia coli (Bacteriophage T4), this protein is Single-stranded DNA-binding protein.